We begin with the raw amino-acid sequence, 330 residues long: Delta-aminolevulinic acid dehydratase (330 aa).

Residues cysteine 122, cysteine 124, histidine 131, and cysteine 132 each coordinate Zn(2+). The active-site Schiff-base intermediate with substrate is the lysine 199. N6-succinyllysine is present on lysine 199. Arginine 209 is a 5-aminolevulinate binding site. Phosphoserine is present on serine 215. Arginine 221 serves as a coordination point for 5-aminolevulinate. A Zn(2+)-binding site is contributed by cysteine 223. Residue lysine 252 is the Schiff-base intermediate with substrate of the active site. Lysine 252 carries the post-translational modification N6-succinyllysine. 5-aminolevulinate-binding residues include serine 279 and tyrosine 318.

It belongs to the ALAD family. In terms of assembly, homooctamer; active form. Homohexamer; low activity form. Zn(2+) is required as a cofactor.

Its subcellular location is the cytoplasm. The protein localises to the cytosol. It carries out the reaction 2 5-aminolevulinate = porphobilinogen + 2 H2O + H(+). It functions in the pathway porphyrin-containing compound metabolism; protoporphyrin-IX biosynthesis; coproporphyrinogen-III from 5-aminolevulinate: step 1/4. With respect to regulation, can alternate between a fully active homooctamer and a low-activity homohexamer. A bound magnesium ion may promote the assembly of the fully active homooctamer. The magnesium-binding site is absent in the low-activity homohexamer. Inhibited by compounds that favor the hexameric state. Inhibited by divalent lead ions. The lead ions partially displace the zinc cofactor. In terms of biological role, catalyzes an early step in the biosynthesis of tetrapyrroles. Binds two molecules of 5-aminolevulinate per subunit, each at a distinct site, and catalyzes their condensation to form porphobilinogen. This Mus musculus (Mouse) protein is Delta-aminolevulinic acid dehydratase (Alad).